Consider the following 208-residue polypeptide: N-(5'-phosphoribosyl)anthranilate isomerase (208 aa).

Belongs to the TrpF family.

It carries out the reaction N-(5-phospho-beta-D-ribosyl)anthranilate = 1-(2-carboxyphenylamino)-1-deoxy-D-ribulose 5-phosphate. It functions in the pathway amino-acid biosynthesis; L-tryptophan biosynthesis; L-tryptophan from chorismate: step 3/5. The polypeptide is N-(5'-phosphoribosyl)anthranilate isomerase (Pyrococcus furiosus (strain ATCC 43587 / DSM 3638 / JCM 8422 / Vc1)).